A 145-amino-acid chain; its full sequence is Transmembrane protein 170A (145 aa).

Over 1 to 50 the chain is Lumenal; it reads MIEALIVGEMQDVQIGFVKQILSLNLVPRSNNTTCGNNTSLCDFSEMWYG. 2 N-linked (GlcNAc...) asparagine glycosylation sites follow: Asn-31 and Asn-37. A helical membrane pass occupies residues 51–71; sequence VFLWAVVSSLIFHLPAALLAL. At 72 to 81 the chain is on the cytoplasmic side; that stretch reads ATLRRHKVAR. A helical membrane pass occupies residues 82-102; sequence FFPLGILLMGIIGPLFGGVLT. Residues 103 to 117 are Lumenal-facing; sequence SAAIAGVYKAAGKSM. The chain crosses the membrane as a helical span at residues 118 to 138; it reads FSLEALVFGVGQSLFIFIISF. At 139 to 145 the chain is on the cytoplasmic side; the sequence is LRILATL.

It belongs to the TMEM170 family.

It localises to the endoplasmic reticulum membrane. The protein localises to the nucleus envelope. In terms of biological role, may regulate membrane morphogenesis in the endoplasmic reticulum (ER) by promoting ER sheet formation at the expense of ER tubules. The chain is Transmembrane protein 170A (tmem170a) from Danio rerio (Zebrafish).